A 483-amino-acid chain; its full sequence is MAIQMPDINLALMLPEIVISVVAMGLLLASAWWEGAEGARRIRRIAAGALMVAMVITLLGVGATQSSTFGGMFVNDRFAAFMKVMLYLSTLLPMVVSWVYLEKSKLGNGEYFVLTLFAMLGGMFMISSGSFLVLYLGIELLSLAIYVLAAYKRDDLASNEAGLKYFVLGSMASGILLYGISLIYGVTGSVDFATINAYLQQDHHSMLGITMGLILVVSGLSFKIAAAPFHMWAPDVYEGAPTSVTAFMAAMPKIAAFAALFRVLVEAFGPMHATWGPIMALLAVVSMGVGALAGLGQSNIKRLLAYSSIGHVGYALIGLAVGNQMGYEAVLVYLTIYIFMNVGAFGLILVLNKEGFGDQIEDYKGLSAKRPGLALLMAIFMFSMAGIPPLAGFMAKLQIFMAAIDAHMYTVAILGVLFSAVSAFYYLKVIKTMYFDEAERAFDMPMDFLSRAIVGVSGILVVLWGILPGSLMASVAETIKSLM.

14 helical membrane-spanning segments follow: residues 8–28, 45–65, 78–98, 106–126, 131–151, 166–186, 206–226, 241–261, 275–295, 303–323, 330–350, 373–393, 399–419, and 452–472; these read INLA…GLLL, IAAG…GATQ, FAAF…VVSW, LGNG…MFMI, FLVL…LAAY, FVLG…IYGV, MLGI…KIAA, PTSV…AALF, WGPI…LAGL, LLAY…AVGN, VLVY…LILV, LALL…LAGF, IFMA…VLFS, and AIVG…GSLM.

The protein belongs to the complex I subunit 2 family. As to quaternary structure, NDH-1 is composed of 14 different subunits. Subunits NuoA, H, J, K, L, M, N constitute the membrane sector of the complex.

It is found in the cell inner membrane. It catalyses the reaction a quinone + NADH + 5 H(+)(in) = a quinol + NAD(+) + 4 H(+)(out). NDH-1 shuttles electrons from NADH, via FMN and iron-sulfur (Fe-S) centers, to quinones in the respiratory chain. The immediate electron acceptor for the enzyme in this species is believed to be ubiquinone. Couples the redox reaction to proton translocation (for every two electrons transferred, four hydrogen ions are translocated across the cytoplasmic membrane), and thus conserves the redox energy in a proton gradient. The protein is NADH-quinone oxidoreductase subunit N of Magnetococcus marinus (strain ATCC BAA-1437 / JCM 17883 / MC-1).